A 90-amino-acid polypeptide reads, in one-letter code: Putative septation protein SpoVG (90 aa).

It belongs to the SpoVG family.

Could be involved in septation. In Clostridium perfringens (strain ATCC 13124 / DSM 756 / JCM 1290 / NCIMB 6125 / NCTC 8237 / Type A), this protein is Putative septation protein SpoVG.